Here is a 290-residue protein sequence, read N- to C-terminus: Bifunctional protein FolD (290 aa).

NADP(+) is bound by residues 169–171 (GAS), Ile194, and Ile235.

Belongs to the tetrahydrofolate dehydrogenase/cyclohydrolase family. In terms of assembly, homodimer.

The catalysed reaction is (6R)-5,10-methylene-5,6,7,8-tetrahydrofolate + NADP(+) = (6R)-5,10-methenyltetrahydrofolate + NADPH. The enzyme catalyses (6R)-5,10-methenyltetrahydrofolate + H2O = (6R)-10-formyltetrahydrofolate + H(+). The protein operates within one-carbon metabolism; tetrahydrofolate interconversion. In terms of biological role, catalyzes the oxidation of 5,10-methylenetetrahydrofolate to 5,10-methenyltetrahydrofolate and then the hydrolysis of 5,10-methenyltetrahydrofolate to 10-formyltetrahydrofolate. This chain is Bifunctional protein FolD, found in Helicobacter pylori (strain J99 / ATCC 700824) (Campylobacter pylori J99).